Consider the following 298-residue polypeptide: Factor-induced gene 1 protein (298 aa).

The next 4 helical transmembrane spans lie at 17 to 37, 163 to 183, 195 to 215, and 243 to 263; these read IFAL…LIGC, VLMA…YVTV, FLLL…MWTH, and VMAW…WLIF. Ser288 bears the Phosphoserine mark. A Phosphothreonine modification is found at Thr293. The residue at position 296 (Ser296) is a Phosphoserine.

The protein resides in the membrane. Its function is as follows. Required for efficient mating. This Saccharomyces cerevisiae (strain ATCC 204508 / S288c) (Baker's yeast) protein is Factor-induced gene 1 protein (FIG1).